Reading from the N-terminus, the 116-residue chain is SPbeta prophage-derived uncharacterized protein YomQ (116 aa).

The protein is SPbeta prophage-derived uncharacterized protein YomQ (yomQ) of Bacillus subtilis (strain 168).